Consider the following 354-residue polypeptide: Putative [LysW]-L-2-aminoadipate/[LysW]-L-glutamate phosphate reductase (354 aa).

NADP(+)-binding positions include 10 to 13 and 34 to 36; these read SGVI and SRR. The active site involves Cys-153. Asn-321 contributes to the NADP(+) binding site.

Belongs to the NAGSA dehydrogenase family. Type 1 subfamily. LysY sub-subfamily.

Its subcellular location is the cytoplasm. It carries out the reaction [amino-group carrier protein]-C-terminal-N-(1-carboxy-5-oxopentan-1-yl)-L-glutamine + phosphate + NADP(+) = [amino-group carrier protein]-C-terminal-N-(1-carboxy-5-phosphooxy-5-oxopentan-1-yl)-L-glutamine + NADPH + H(+). The catalysed reaction is [amino-group carrier protein]-C-terminal-gamma-(L-glutamyl-5-semialdehyde)-L-glutamate + phosphate + NADP(+) = [amino-group carrier protein]-C-terminal-gamma-(5-phospho-L-glutamyl)-L-glutamate + NADPH + H(+). It participates in amino-acid biosynthesis; L-lysine biosynthesis via AAA pathway; L-lysine from L-alpha-aminoadipate (Thermus route): step 3/5. The protein operates within amino-acid biosynthesis; L-arginine biosynthesis. Functionally, involved in both the arginine and lysine biosynthetic pathways. The sequence is that of Putative [LysW]-L-2-aminoadipate/[LysW]-L-glutamate phosphate reductase from Caldivirga maquilingensis (strain ATCC 700844 / DSM 13496 / JCM 10307 / IC-167).